Here is a 306-residue protein sequence, read N- to C-terminus: MATEIPVGRKVRVKVPGSSANLGPGFDSLGLALSIYDHVEVEVIDSGLEVEVTGEGQGEVPLDERHLVVRAIRAGLKKADVIARGLRVRCNNSIPQSRGLGSSAAAAVSGVVAANALAGDVLDTDTIIQLASTFEGHPDNVAASVLGSAVVSWTNIPVDGTEPTYHASPVTVHPDIRATALIPNSHASTEAVRRVLPSDIPHLDARFNVSRTGVLLVALSKDPSLLWEGTRDRMHQPFRAEVLPISSEWVNRLRNQGYPAFLSGAGPTVLVLSTEPVEEALLQEARDRGIRVEELTVAGPVTVEDA.

Residue 95 to 105 participates in ATP binding; it reads PQSRGLGSSAA.

This sequence belongs to the GHMP kinase family. Homoserine kinase subfamily.

The protein resides in the cytoplasm. The enzyme catalyses L-homoserine + ATP = O-phospho-L-homoserine + ADP + H(+). Its pathway is amino-acid biosynthesis; L-threonine biosynthesis; L-threonine from L-aspartate: step 4/5. In terms of biological role, catalyzes the ATP-dependent phosphorylation of L-homoserine to L-homoserine phosphate. The sequence is that of Homoserine kinase from Corynebacterium urealyticum (strain ATCC 43042 / DSM 7109).